Reading from the N-terminus, the 235-residue chain is Pathogen-related protein (235 aa).

In Hordeum vulgare (Barley), this protein is Pathogen-related protein.